The chain runs to 128 residues: Phosphoribosyl-AMP cyclohydrolase (128 aa).

Asp-86 contacts Mg(2+). A Zn(2+)-binding site is contributed by Cys-87. Asp-88 and Asp-90 together coordinate Mg(2+). Zn(2+) is bound by residues Cys-103 and Cys-110.

It belongs to the PRA-CH family. In terms of assembly, homodimer. It depends on Mg(2+) as a cofactor. Requires Zn(2+) as cofactor.

It localises to the cytoplasm. It carries out the reaction 1-(5-phospho-beta-D-ribosyl)-5'-AMP + H2O = 1-(5-phospho-beta-D-ribosyl)-5-[(5-phospho-beta-D-ribosylamino)methylideneamino]imidazole-4-carboxamide. It functions in the pathway amino-acid biosynthesis; L-histidine biosynthesis; L-histidine from 5-phospho-alpha-D-ribose 1-diphosphate: step 3/9. Its function is as follows. Catalyzes the hydrolysis of the adenine ring of phosphoribosyl-AMP. The chain is Phosphoribosyl-AMP cyclohydrolase from Roseobacter denitrificans (strain ATCC 33942 / OCh 114) (Erythrobacter sp. (strain OCh 114)).